We begin with the raw amino-acid sequence, 545 residues long: Chaperonin GroEL (545 aa).

ATP contacts are provided by residues 29–32 (TIGP), 86–90 (DGTTT), G413, 478–480 (NAA), and D494.

The protein belongs to the chaperonin (HSP60) family. As to quaternary structure, forms a cylinder of 14 subunits composed of two heptameric rings stacked back-to-back. Interacts with the co-chaperonin GroES.

The protein localises to the cytoplasm. The enzyme catalyses ATP + H2O + a folded polypeptide = ADP + phosphate + an unfolded polypeptide.. In terms of biological role, together with its co-chaperonin GroES, plays an essential role in assisting protein folding. The GroEL-GroES system forms a nano-cage that allows encapsulation of the non-native substrate proteins and provides a physical environment optimized to promote and accelerate protein folding. This is Chaperonin GroEL from Exiguobacterium sibiricum (strain DSM 17290 / CCUG 55495 / CIP 109462 / JCM 13490 / 255-15).